Reading from the N-terminus, the 539-residue chain is Probable quinate permease (539 aa).

Residues 1–22 lie on the Cytoplasmic side of the membrane; sequence MSILSMVEDRPTPKEVYNWRIY. The chain crosses the membrane as a helical span at residues 23-43; that stretch reads LLAAVASFTSCMIGYDSAFIG. Topologically, residues 44–74 are extracellular; that stretch reads TTISLDSFKNEFHWDSMSTAKQNLVSANIVS. The helical transmembrane segment at 75-95 threads the bilayer; it reads CYQAGAFFGAFFAYPIGHFWG. The Cytoplasmic segment spans residues 96-97; that stretch reads RK. Residues 98–118 form a helical membrane-spanning segment; that stretch reads WGLMLSALVFTLGAGLMLGAN. Residues 119-130 are Extracellular-facing; it reads GDRGLGLIYGGR. A helical membrane pass occupies residues 131–151; that stretch reads VLAGLGVGAGSNFTPIYISEL. Residues 152–159 lie on the Cytoplasmic side of the membrane; it reads APPAIRGR. Residues 160–180 traverse the membrane as a helical segment; the sequence is LVGVYELGWQVGGLVGFWINY. The Extracellular segment spans residues 181–193; sequence GVEQTMAPSHKQW. Residues 194 to 214 traverse the membrane as a helical segment; that stretch reads LIPFAVQLIPAGLLIIGILFV. Residues 215 to 285 are Cytoplasmic-facing; sequence KESPRWLFLR…AWTNKRILYR (71 aa). The helical transmembrane segment at 286–306 threads the bilayer; that stretch reads LFLGSMLFFWQNGSGINAINY. At 307 to 325 the chain is on the extracellular side; the sequence is YSPTVFKSIGLKGNSSSLL. The helical transmembrane segment at 326–346 threads the bilayer; that stretch reads TTGIFGVVKTVVTIVWLLYLI. Topologically, residues 347–352 are cytoplasmic; sequence DHVGRR. A helical transmembrane segment spans residues 353–373; that stretch reads LLLLIGAAGGSICMWIVGAYI. Over 374–387 the chain is Extracellular; that stretch reads KVVDPTHNQSDHLN. A helical transmembrane segment spans residues 388–408; the sequence is GGGVAAIFFFYLWTAFYTPSW. The Cytoplasmic segment spans residues 409-456; the sequence is NGTPWVINSEMFDPNIRSLAQACAAGSNWLWNFLISRFTPQMFAKMDY. The helical transmembrane segment at 457-477 threads the bilayer; that stretch reads GVYFFFASLMLLSIPFVFFLV. The Extracellular segment spans residues 478–539; the sequence is PETKGIPLEN…EQVEDTDRKE (62 aa).

The protein belongs to the major facilitator superfamily. Sugar transporter (TC 2.A.1.1) family. As to quaternary structure, interacts with creB. Ubiquitinated. Deubiquitinated by creB, probably to control its activity or amount.

It is found in the cell membrane. Functionally, integral membrane transporter that imports quinic acid to be catabolized as a carbon source. This chain is Probable quinate permease (qutD), found in Aspergillus niger (strain ATCC MYA-4892 / CBS 513.88 / FGSC A1513).